A 30-amino-acid chain; its full sequence is Cysteine-rich venom protein mossambin (30 aa).

A disordered region spans residues 1–30; that stretch reads NVDFNSESTRRKKKQNEIVDLHNSLRRTVN.

Belongs to the CRISP family. Post-translationally, contains 8 disulfide bonds. In terms of tissue distribution, expressed by the venom gland.

The protein resides in the secreted. Functionally, inhibits calcium-activated potassium channels (KCa), voltage-gated potassium channel (Kv), and the calcium release channel/ryanodine receptor (RyR). This is Cysteine-rich venom protein mossambin from Naja mossambica (Mozambique spitting cobra).